A 314-amino-acid chain; its full sequence is Basic leucine zipper 63 (314 aa).

A Phosphoserine; by KIN10 modification is found at S29. The disordered stretch occupies residues 94 to 177 (KPQDTSGRSD…SRRRKQAHLS (84 aa)). Positions 96–133 (QDTSGRSDNGGANESEQASLASSKATPMMSSAITSGSE) are enriched in polar residues. The region spanning 151–214 (NVKRVKRMLS…NDASVENRVL (64 aa)) is the bZIP domain. Positions 153-172 (KRVKRMLSNRESARRSRRRK) are basic motif. The Nuclear localization signal 1 motif lies at 155 to 162 (VKRMLSNR). The segment at 179–193 (LETQVSQLRVENSKL) is leucine-zipper. The interval 253-274 (SLPSETSNSPDTTSSQVTTPEI) is disordered. Residues S294 and S300 each carry the phosphoserine; by KIN10 modification. The short motif at 295 to 302 (MRRVESLE) is the Nuclear localization signal 2 element.

It belongs to the bZIP family. As to quaternary structure, homodimer. Forms a heterodimer with LSD1, BZIP1, BZIP2, BZIP9, BZIP10, BZIP11, BZIP25, BZIP44 and BZIP53. Interacts with KIN10 and SNF4. Component of a ternary complex composed of BZIP2-BZIP63 heterodimer and KIN10. Post-translationally, phosphorylated. The phosphorylation at Ser-29, Ser-294 and Ser-300 by KIN10 strongly enhances its ability to form homo- as well as heterodimers and are then essential for its transcriptional activity. As to expression, expressed in roots, shoots, young leaves, pollen, and flowers.

The protein localises to the nucleus. With respect to regulation, up-regulated by KIN10 under a phosphorylation-dependent manner. Functionally, transcription factor involved in controlling responses to starvation. BZIP2-BZIP63-KIN10 complex binds to the ETFQO promoter to up-regulate its transcription. This chain is Basic leucine zipper 63 (BZIP63), found in Arabidopsis thaliana (Mouse-ear cress).